The following is a 157-amino-acid chain: Protein FAM218A (157 aa).

A disordered region spans residues 104–127 (PAVTPPKLPGHSKSEGPPGKVRKR).

The polypeptide is Protein FAM218A (FAM218A) (Homo sapiens (Human)).